The sequence spans 75 residues: Translational regulator CsrA (75 aa).

Belongs to the CsrA/RsmA family. In terms of assembly, homodimer; the beta-strands of each monomer intercalate to form a hydrophobic core, while the alpha-helices form wings that extend away from the core.

It localises to the cytoplasm. In terms of biological role, a translational regulator that binds mRNA to regulate translation initiation and/or mRNA stability. Usually binds in the 5'-UTR at or near the Shine-Dalgarno sequence preventing ribosome-binding, thus repressing translation. Its main target seems to be the major flagellin gene, while its function is anatagonized by FliW. In Treponema denticola (strain ATCC 35405 / DSM 14222 / CIP 103919 / JCM 8153 / KCTC 15104), this protein is Translational regulator CsrA.